Reading from the N-terminus, the 388-residue chain is Cuticle-degrading protease (388 aa).

The first 18 residues, 1–18 (MHLSALLTLLPAVLAAPA), serve as a signal peptide directing secretion. The propeptide occupies 19 to 107 (TIGRRAEPAP…IEKDAVMRIS (89 aa)). The Inhibitor I9 domain maps to 41–106 (KYIVKFKDDI…FIEKDAVMRI (66 aa)). Positions 116–388 (PWGLGRISHR…TVNYLAYNGA (273 aa)) constitute a Peptidase S8 domain. 2 disulfides stabilise this stretch: Cys-143/Cys-233 and Cys-288/Cys-360. Residues Asp-148 and His-179 each act as charge relay system in the active site. An N-linked (GlcNAc...) asparagine glycan is attached at Asn-296. Ser-334 functions as the Charge relay system in the catalytic mechanism.

Belongs to the peptidase S8 family.

It localises to the secreted. Functionally, capable of breaching the insect cuticle. This Metarhizium anisopliae (Entomophthora anisopliae) protein is Cuticle-degrading protease (PR1).